Here is a 786-residue protein sequence, read N- to C-terminus: Endonuclease MutS2 (786 aa).

335-342 (GPNTGGKT) contributes to the ATP binding site. Residues 711-786 (LDLRGERFEN…GLGVTVVELK (76 aa)) form the Smr domain.

Belongs to the DNA mismatch repair MutS family. MutS2 subfamily. As to quaternary structure, homodimer. Binds to stalled ribosomes, contacting rRNA.

Its function is as follows. Endonuclease that is involved in the suppression of homologous recombination and thus may have a key role in the control of bacterial genetic diversity. Functionally, acts as a ribosome collision sensor, splitting the ribosome into its 2 subunits. Detects stalled/collided 70S ribosomes which it binds and splits by an ATP-hydrolysis driven conformational change. Acts upstream of the ribosome quality control system (RQC), a ribosome-associated complex that mediates the extraction of incompletely synthesized nascent chains from stalled ribosomes and their subsequent degradation. Probably generates substrates for RQC. This is Endonuclease MutS2 from Bacillus thuringiensis (strain Al Hakam).